Consider the following 146-residue polypeptide: Hut operon positive regulatory protein (146 aa).

Belongs to the HutP family. Homohexamer.

In terms of biological role, antiterminator that binds to cis-acting regulatory sequences on the mRNA in the presence of histidine, thereby suppressing transcription termination and activating the hut operon for histidine utilization. This Bacillus cereus (strain ZK / E33L) protein is Hut operon positive regulatory protein.